Reading from the N-terminus, the 151-residue chain is Deoxyuridine 5'-triphosphate nucleotidohydrolase (151 aa).

Substrate contacts are provided by residues 70 to 72, Asn-83, 87 to 89, and Met-97; these read RSG and LID.

The protein belongs to the dUTPase family. It depends on Mg(2+) as a cofactor.

It carries out the reaction dUTP + H2O = dUMP + diphosphate + H(+). It participates in pyrimidine metabolism; dUMP biosynthesis; dUMP from dCTP (dUTP route): step 2/2. Its function is as follows. This enzyme is involved in nucleotide metabolism: it produces dUMP, the immediate precursor of thymidine nucleotides and it decreases the intracellular concentration of dUTP so that uracil cannot be incorporated into DNA. The polypeptide is Deoxyuridine 5'-triphosphate nucleotidohydrolase (Pseudomonas aeruginosa (strain LESB58)).